The sequence spans 59 residues: Small ribosomal subunit protein eS30 (59 aa).

The segment at 1–35 (KVHGSLARAGKVRGQTPKVAKQEKKKKKTGRAKRR) is disordered. The segment covering 23–35 (EKKKKKTGRAKRR) has biased composition (basic residues). An N6-succinyllysine modification is found at Lys-51.

Belongs to the eukaryotic ribosomal protein eS30 family.

The polypeptide is Small ribosomal subunit protein eS30 (Fau) (Mus spicilegus (Steppe mouse)).